Here is a 172-residue protein sequence, read N- to C-terminus: Large ribosomal subunit protein uL10 (172 aa).

This sequence belongs to the universal ribosomal protein uL10 family. As to quaternary structure, part of the ribosomal stalk of the 50S ribosomal subunit. The N-terminus interacts with L11 and the large rRNA to form the base of the stalk. The C-terminus forms an elongated spine to which L12 dimers bind in a sequential fashion forming a multimeric L10(L12)X complex.

Functionally, forms part of the ribosomal stalk, playing a central role in the interaction of the ribosome with GTP-bound translation factors. This Parvibaculum lavamentivorans (strain DS-1 / DSM 13023 / NCIMB 13966) protein is Large ribosomal subunit protein uL10.